Here is a 486-residue protein sequence, read N- to C-terminus: Citrate synthase 3, mitochondrial (486 aa).

Residues 1 to 23 (MVQRLLPGAHICRRSFNSSAIIK) constitute a mitochondrion transit peptide. Residues His-315, His-361, and Asp-419 contribute to the active site. Residues 484-486 (NKL) carry the Microbody targeting signal motif.

The protein belongs to the citrate synthase family.

The protein localises to the mitochondrion. The enzyme catalyses oxaloacetate + acetyl-CoA + H2O = citrate + CoA + H(+). It functions in the pathway carbohydrate metabolism; tricarboxylic acid cycle; isocitrate from oxaloacetate: step 1/2. In terms of biological role, dual specificity mitochondrial citrate and methylcitrate synthase with similar catalytic efficiency with both acetyl-CoA and propionyl-CoA. The sequence is that of Citrate synthase 3, mitochondrial from Saccharomyces cerevisiae (strain ATCC 204508 / S288c) (Baker's yeast).